A 416-amino-acid chain; its full sequence is Solute carrier family 35 member D3 (416 aa).

The next 10 helical transmembrane spans lie at 9-29, 38-58, 64-84, 103-123, 131-151, 155-175, 187-207, 224-244, 257-277, and 280-300; these read VLGI…NILL, FSFL…SLEL, LIAV…VAVL, MYVV…VLVL, GVLA…AGDL, PIGY…LVLI, LTAQ…CSFA, AMVC…FTTL, FVGV…FSDV, and TSLF…YCVA. The interval 334–384 is disordered; that stretch reads MEELPGEGGNGRSEGGEAAGGPAQESRQEVRGSPRGVPLVAGSSEEGSRRS. Gly residues predominate over residues 339 to 352; it reads GEGGNGRSEGGEAA.

The protein belongs to the TPT transporter family. SLC35D subfamily. As to quaternary structure, could interact with ATG14, BECN1 and PIK3C3 that form the PI3KC3-C1/AIC/autophagy initiation complex; enhancing the formation of the AIC and promoting autophagy.

Its subcellular location is the cytoplasmic vesicle. It is found in the secretory vesicle. It localises to the synaptic vesicle membrane. The protein resides in the early endosome membrane. The protein localises to the endoplasmic reticulum membrane. It catalyses the reaction UDP-alpha-D-glucose(in) = UDP-alpha-D-glucose(out). With respect to regulation, inhibited by proton uncouplers that directly abolish the proton electrochemical gradient. Functionally, probable UDP-glucose transmembrane transporter involved in UDP-glucose transport from the cytosol to the lumen of synaptic vesicles. It is involved in platelet dense granules maturation. In terms of biological role, alternatively, could function as a molecular adapter enhancing the formation of the PI3KC3-C1/AIC/autophagy initiation complex to promote autophagy in dopaminergic neurons. Could also regulate the plasma membrane localization of the D(1A) dopamine receptor/DRD1 and dopamine signaling. The sequence is that of Solute carrier family 35 member D3 from Homo sapiens (Human).